A 156-amino-acid chain; its full sequence is Small ribosomal subunit protein uS7 (156 aa).

Belongs to the universal ribosomal protein uS7 family. As to quaternary structure, part of the 30S ribosomal subunit. Contacts proteins S9 and S11.

In terms of biological role, one of the primary rRNA binding proteins, it binds directly to 16S rRNA where it nucleates assembly of the head domain of the 30S subunit. Is located at the subunit interface close to the decoding center, probably blocks exit of the E-site tRNA. The protein is Small ribosomal subunit protein uS7 of Bacillus cereus (strain B4264).